A 174-amino-acid chain; its full sequence is Protein COFACTOR ASSEMBLY OF COMPLEX C SUBUNIT B CCB3, chloroplastic (174 aa).

Residues 1-39 (MTTVTTSFVSFSPALMIFQKKSRRSSPNFRNRSTSLPIV) constitute a chloroplast transit peptide. Residues 40–78 (SATLSHIEEAATTTNLIRQTNSISESLRNISLADLDPGT) lie on the Lumenal side of the membrane. A helical membrane pass occupies residues 79 to 99 (AKLAIGILGPALSAFGFLFIL). Over 100-147 (RIVMSWYPKLPVDKFPYVLAYAPTEPILVQTRKVIPPLAGVDVTPVVW) the chain is Stromal. The chain crosses the membrane as a helical span at residues 148-168 (FGLVSFLSEILVGPQGLLVLV). Over 169–174 (SQQQVN) the chain is Lumenal.

It belongs to the YggT family.

It localises to the plastid. It is found in the chloroplast thylakoid membrane. In terms of biological role, required for the biogenesis and accumulation of native cytochrome b6 in the thylakoid membrane. Controls the conversion of apocytochrome b6 to holocytochrome b6. Required for covalent binding of the c-type heme to cytochrome b6. The sequence is that of Protein COFACTOR ASSEMBLY OF COMPLEX C SUBUNIT B CCB3, chloroplastic from Arabidopsis thaliana (Mouse-ear cress).